A 206-amino-acid polypeptide reads, in one-letter code: Thiamine-phosphate synthase (206 aa).

Residues 38–42 (QLREK) and Asn-70 contribute to the 4-amino-2-methyl-5-(diphosphooxymethyl)pyrimidine site. Mg(2+) is bound by residues Asp-71 and Asp-90. Thr-109 provides a ligand contact to 4-amino-2-methyl-5-(diphosphooxymethyl)pyrimidine. 135 to 137 (TST) is a 2-[(2R,5Z)-2-carboxy-4-methylthiazol-5(2H)-ylidene]ethyl phosphate binding site. Lys-138 lines the 4-amino-2-methyl-5-(diphosphooxymethyl)pyrimidine pocket. 2-[(2R,5Z)-2-carboxy-4-methylthiazol-5(2H)-ylidene]ethyl phosphate-binding positions include Gly-165 and 185–186 (VS).

It belongs to the thiamine-phosphate synthase family. It depends on Mg(2+) as a cofactor.

It catalyses the reaction 2-[(2R,5Z)-2-carboxy-4-methylthiazol-5(2H)-ylidene]ethyl phosphate + 4-amino-2-methyl-5-(diphosphooxymethyl)pyrimidine + 2 H(+) = thiamine phosphate + CO2 + diphosphate. The catalysed reaction is 2-(2-carboxy-4-methylthiazol-5-yl)ethyl phosphate + 4-amino-2-methyl-5-(diphosphooxymethyl)pyrimidine + 2 H(+) = thiamine phosphate + CO2 + diphosphate. The enzyme catalyses 4-methyl-5-(2-phosphooxyethyl)-thiazole + 4-amino-2-methyl-5-(diphosphooxymethyl)pyrimidine + H(+) = thiamine phosphate + diphosphate. The protein operates within cofactor biosynthesis; thiamine diphosphate biosynthesis; thiamine phosphate from 4-amino-2-methyl-5-diphosphomethylpyrimidine and 4-methyl-5-(2-phosphoethyl)-thiazole: step 1/1. Functionally, condenses 4-methyl-5-(beta-hydroxyethyl)thiazole monophosphate (THZ-P) and 2-methyl-4-amino-5-hydroxymethyl pyrimidine pyrophosphate (HMP-PP) to form thiamine monophosphate (TMP). The sequence is that of Thiamine-phosphate synthase from Fusobacterium nucleatum subsp. nucleatum (strain ATCC 25586 / DSM 15643 / BCRC 10681 / CIP 101130 / JCM 8532 / KCTC 2640 / LMG 13131 / VPI 4355).